The primary structure comprises 434 residues: MNITFIGSGYVGLVSGIIMGYLGHNVTCLDNDDVKISKLNKKILPIYEAKLDEYLKHALESDRLKFTNIYSNEFRNFDAIFITVGTPSKELGEADLKYVYDAVDKVSKHINKDCLIVIKSTVPPGSCNNIIAYLKAKGFSFNVASNPEFLREGSAVEDFLYPDRIVVGVNNKESEALLRKIYAPLIEQGAKFLVTNLVTSELIKYVSNSFLATKIAFINEMADLCEKIGANIKDLSQGVGLDQRIGRNFLNAGPGFGGSCFPKDILALNNLVENHKIDCKILKSVIKSNKLRPSNMVAKIATLLDGDLKGRNIAILGLTYKAGTDDVRASPAIEIITILLNKDVYVKAFDPIGLENAKKNLEHKNLLYFASAVEACKSVDIIVIATEWSEFKELNWQEIYNLVKSPMIIDLRNILDNEVMKKIGFRYYAVGSQI.

Residues 2–19 (NITF…GIIM), V11, D30, K35, T121, and E152 each bind NAD(+). Residues 148–152 (EFLRE), K204, N208, 249–253 (FLNAG), and G257 each bind substrate. The active-site Nucleophile is C260. K263 provides a ligand contact to NAD(+). K321 lines the substrate pocket. R328 serves as a coordination point for NAD(+).

This sequence belongs to the UDP-glucose/GDP-mannose dehydrogenase family.

It carries out the reaction UDP-alpha-D-glucose + 2 NAD(+) + H2O = UDP-alpha-D-glucuronate + 2 NADH + 3 H(+). The protein operates within nucleotide-sugar biosynthesis; UDP-alpha-D-glucuronate biosynthesis; UDP-alpha-D-glucuronate from UDP-alpha-D-glucose: step 1/1. The sequence is that of UDP-glucose 6-dehydrogenase (udg) from Rickettsia prowazekii (strain Madrid E).